The sequence spans 669 residues: DNA ligase (669 aa).

NAD(+) contacts are provided by residues 34–38 (DAEYD), 83–84 (SL), and Glu-114. The active-site N6-AMP-lysine intermediate is the Lys-116. Residues Arg-137, Glu-171, Lys-287, and Lys-311 each coordinate NAD(+). Residues Cys-405, Cys-408, Cys-423, and Cys-428 each coordinate Zn(2+). One can recognise a BRCT domain in the interval 591–669 (NVESYFAGKT…EERFLQELNK (79 aa)).

Belongs to the NAD-dependent DNA ligase family. LigA subfamily. Requires Mg(2+) as cofactor. It depends on Mn(2+) as a cofactor.

It catalyses the reaction NAD(+) + (deoxyribonucleotide)n-3'-hydroxyl + 5'-phospho-(deoxyribonucleotide)m = (deoxyribonucleotide)n+m + AMP + beta-nicotinamide D-nucleotide.. DNA ligase that catalyzes the formation of phosphodiester linkages between 5'-phosphoryl and 3'-hydroxyl groups in double-stranded DNA using NAD as a coenzyme and as the energy source for the reaction. It is essential for DNA replication and repair of damaged DNA. The protein is DNA ligase of Bacillus mycoides (strain KBAB4) (Bacillus weihenstephanensis).